The chain runs to 273 residues: Glutamate racemase (273 aa).

Substrate is bound by residues 9-10 and 41-42; these read DS and YG. Cysteine 73 (proton donor/acceptor) is an active-site residue. A substrate-binding site is contributed by 74 to 75; sequence NT. Cysteine 183 (proton donor/acceptor) is an active-site residue. A substrate-binding site is contributed by 184-185; it reads TH.

It belongs to the aspartate/glutamate racemases family.

The enzyme catalyses L-glutamate = D-glutamate. Its pathway is cell wall biogenesis; peptidoglycan biosynthesis. Functionally, provides the (R)-glutamate required for cell wall biosynthesis. The chain is Glutamate racemase from Shewanella oneidensis (strain ATCC 700550 / JCM 31522 / CIP 106686 / LMG 19005 / NCIMB 14063 / MR-1).